The following is a 354-amino-acid chain: UDP-N-acetylglucosamine--N-acetylmuramyl-(pentapeptide) pyrophosphoryl-undecaprenol N-acetylglucosamine transferase (354 aa).

2 residues coordinate UDP-N-acetyl-alpha-D-glucosamine: S196 and Q288.

It belongs to the glycosyltransferase 28 family. MurG subfamily.

It is found in the cell membrane. The enzyme catalyses Mur2Ac(oyl-L-Ala-gamma-D-Glu-L-Lys-D-Ala-D-Ala)-di-trans,octa-cis-undecaprenyl diphosphate + UDP-N-acetyl-alpha-D-glucosamine = beta-D-GlcNAc-(1-&gt;4)-Mur2Ac(oyl-L-Ala-gamma-D-Glu-L-Lys-D-Ala-D-Ala)-di-trans,octa-cis-undecaprenyl diphosphate + UDP + H(+). It functions in the pathway cell wall biogenesis; peptidoglycan biosynthesis. Its function is as follows. Cell wall formation. Catalyzes the transfer of a GlcNAc subunit on undecaprenyl-pyrophosphoryl-MurNAc-pentapeptide (lipid intermediate I) to form undecaprenyl-pyrophosphoryl-MurNAc-(pentapeptide)GlcNAc (lipid intermediate II). The polypeptide is UDP-N-acetylglucosamine--N-acetylmuramyl-(pentapeptide) pyrophosphoryl-undecaprenol N-acetylglucosamine transferase (Streptococcus suis (strain 98HAH33)).